Reading from the N-terminus, the 106-residue chain is ATP-dependent Clp protease adapter protein ClpS (106 aa).

The protein belongs to the ClpS family. In terms of assembly, binds to the N-terminal domain of the chaperone ClpA.

Involved in the modulation of the specificity of the ClpAP-mediated ATP-dependent protein degradation. This is ATP-dependent Clp protease adapter protein ClpS from Escherichia coli O139:H28 (strain E24377A / ETEC).